The sequence spans 862 residues: FAS1 domain-containing protein YLR001C (862 aa).

The signal sequence occupies residues 1–23 (MNMAIQTIKYIFWLLPILGLTQA). Over 24-762 (LLQNPGDDFP…KYHLRLPGIA (739 aa)) the chain is Vacuolar. Residues 34–162 (FSTVIDILSE…ASLQGINNLL (129 aa)) enclose the FAS1 1 domain. N-linked (GlcNAc...) asparagine glycans are attached at residues N68, N112, N152, N200, N291, N333, N450, N521, N542, N569, N663, N679, and N688. FAS1 domains are found at residues 463 to 604 (PGDL…DQLD) and 606 to 744 (PVDL…DKPI). A helical membrane pass occupies residues 763–783 (VGFGVIIGVTIAISLLFCIII). Topologically, residues 784–862 (TRGGKVKDKN…QKGGRSVSTS (79 aa)) are cytoplasmic.

The protein localises to the vacuole membrane. The sequence is that of FAS1 domain-containing protein YLR001C from Saccharomyces cerevisiae (strain ATCC 204508 / S288c) (Baker's yeast).